A 222-amino-acid polypeptide reads, in one-letter code: Ras-related protein Rab-21 (222 aa).

Ala-2 carries the post-translational modification N-acetylalanine. GTP is bound by residues Gly-26, Gly-29, Lys-30, Thr-31, Ser-32, Asn-43, Asp-44, His-46, Thr-48, and Thr-49. Thr-31 is a Mg(2+) binding site. Residues 41–54 carry the Switch 1 motif; that stretch reads KFNDKHITTLQASF. Mg(2+) is bound by residues Thr-49 and Asp-72. The short motif at 74-92 is the Switch 2 element; that stretch reads AGQERFHALGPIYYRDSNG. GTP contacts are provided by Gly-75, Asn-130, Lys-131, Asp-133, Ala-161, and Lys-162. 2 S-geranylgeranyl cysteine lipidation sites follow: Cys-218 and Cys-219. Residue Cys-219 is modified to Cysteine methyl ester. Residues 220 to 222 constitute a propeptide, removed in mature form; the sequence is SSG.

This sequence belongs to the small GTPase superfamily. Rab family. Interacts with the cytoplasmic tail of integrins ITGA1, ITGA2, ITGA5, ITGA6, ITGA11 and ITGB1; this interaction is dependent upon its GDP/GTP cycle. Interacts with RABGEF1 (via VPS9 domain). Interacts with ANKRD27. Interacts with VAMP7. Interacts (in GTP-bound form) with VAMP8 in response to starvation; the interaction probably regulates VAMP8 endolysosomal trafficking. Interacts (active GTP-bound form) with TMED10; the interaction is indirect and regulates TMED10 abundance and localization at the Golgi. It depends on Mg(2+) as a cofactor.

The protein resides in the endoplasmic reticulum membrane. It localises to the golgi apparatus. The protein localises to the trans-Golgi network. It is found in the golgi apparatus membrane. Its subcellular location is the early endosome membrane. The protein resides in the cytoplasmic vesicle membrane. It localises to the cleavage furrow. The protein localises to the cell projection. It is found in the neuron projection. It carries out the reaction GTP + H2O = GDP + phosphate + H(+). With respect to regulation, regulated by guanine nucleotide exchange factors (GEFs) including ANKRD27 and RABGEF1, which promote the exchange of bound GDP for free GTP. Regulated by GTPase activating proteins (GAPs) which increase the GTP hydrolysis activity. Inhibited by GDP dissociation inhibitors (GDIs). Functionally, the small GTPases Rab are key regulators of intracellular membrane trafficking, from the formation of transport vesicles to their fusion with membranes. Rabs cycle between an inactive GDP-bound form and an active GTP-bound form that is able to recruit to membranes different sets of downstream effectors directly responsible for vesicle formation, movement, tethering and fusion. RAB21 is involved in membrane trafficking control. Regulates integrin internalization and recycling, but does not influence the traffic of endosomally translocated receptors in general. As a result, may regulate cell adhesion and migration. During the mitosis of adherent cells, controls the endosomal trafficking of integrins which is required for the successful completion of cytokinesis. Involved in neurite growth. Following SBF2/MTMT13-mediated activation in response to starvation-induced autophagy, binds to and regulates SNARE protein VAMP8 endolysosomal transport required for SNARE-mediated autophagosome-lysosome fusion. Modulates protein levels of the cargo receptors TMED2 and TMED10, and required for appropriate Golgi localization of TMED10. The protein is Ras-related protein Rab-21 of Mus musculus (Mouse).